The primary structure comprises 427 residues: Gamma-glutamyl phosphate reductase (427 aa).

The protein belongs to the gamma-glutamyl phosphate reductase family.

The protein resides in the cytoplasm. The catalysed reaction is L-glutamate 5-semialdehyde + phosphate + NADP(+) = L-glutamyl 5-phosphate + NADPH + H(+). Its pathway is amino-acid biosynthesis; L-proline biosynthesis; L-glutamate 5-semialdehyde from L-glutamate: step 2/2. In terms of biological role, catalyzes the NADPH-dependent reduction of L-glutamate 5-phosphate into L-glutamate 5-semialdehyde and phosphate. The product spontaneously undergoes cyclization to form 1-pyrroline-5-carboxylate. This is Gamma-glutamyl phosphate reductase from Rhizobium etli (strain ATCC 51251 / DSM 11541 / JCM 21823 / NBRC 15573 / CFN 42).